The chain runs to 170 residues: UPF0260 protein RPB_3505 (170 aa).

This sequence belongs to the UPF0260 family.

The protein is UPF0260 protein RPB_3505 of Rhodopseudomonas palustris (strain HaA2).